The chain runs to 142 residues: Large-conductance mechanosensitive channel (142 aa).

A run of 3 helical transmembrane segments spans residues V19–V39, P41–G61, and F78–F98.

The protein belongs to the MscL family. In terms of assembly, homopentamer.

It is found in the cell inner membrane. In terms of biological role, channel that opens in response to stretch forces in the membrane lipid bilayer. May participate in the regulation of osmotic pressure changes within the cell. The sequence is that of Large-conductance mechanosensitive channel from Roseobacter denitrificans (strain ATCC 33942 / OCh 114) (Erythrobacter sp. (strain OCh 114)).